The primary structure comprises 59 residues: Large ribosomal subunit protein bL32 (59 aa).

Residues 1 to 21 are disordered; the sequence is MAVPKKKSSKSKGRSRAAHHA.

The protein belongs to the bacterial ribosomal protein bL32 family.

This Magnetococcus marinus (strain ATCC BAA-1437 / JCM 17883 / MC-1) protein is Large ribosomal subunit protein bL32.